The chain runs to 691 residues: WD repeat-containing protein 48 homolog (691 aa).

8 WD repeats span residues 27–82, 88–130, 133–168, 180–219, 222–261, 264–303, 306–347, and 399–438; these read LHRS…PVQY, RHTD…YLDS, LHTD…NSNF, GCKN…KPMK, GHSD…NIAT, AHEE…KFQV, KEEA…QNSN, and SGAP…KVKE.

The protein belongs to the WD repeat WDR48 family. Interacts with usp-46; the interaction increases the catalytic activity of usp-46 in the presence of wdr-20.

Its function is as follows. Together with wdr-20, binds to and stimulates the activity of the deubiquitinating enzyme usp-46, leading to deubiquitination and stabilization of the glr-1 glutamate receptor. This is WD repeat-containing protein 48 homolog (wdr-48) from Caenorhabditis briggsae.